The following is a 265-amino-acid chain: Adenosylcobinamide-GDP ribazoletransferase (265 aa).

A run of 7 helical transmembrane segments spans residues 40 to 60 (IAYA…VVLV), 67 to 87 (LPAF…TGAF), 121 to 141 (GGCA…ALVA), 150 to 170 (LALV…LLAL), 191 to 211 (LACA…GFGI), 213 to 233 (TAFA…RLSG), and 243 to 263 (VAGA…LIFP).

It belongs to the CobS family. It depends on Mg(2+) as a cofactor.

Its subcellular location is the cell inner membrane. It carries out the reaction alpha-ribazole + adenosylcob(III)inamide-GDP = adenosylcob(III)alamin + GMP + H(+). The catalysed reaction is alpha-ribazole 5'-phosphate + adenosylcob(III)inamide-GDP = adenosylcob(III)alamin 5'-phosphate + GMP + H(+). The protein operates within cofactor biosynthesis; adenosylcobalamin biosynthesis; adenosylcobalamin from cob(II)yrinate a,c-diamide: step 7/7. Its function is as follows. Joins adenosylcobinamide-GDP and alpha-ribazole to generate adenosylcobalamin (Ado-cobalamin). Also synthesizes adenosylcobalamin 5'-phosphate from adenosylcobinamide-GDP and alpha-ribazole 5'-phosphate. This Xanthobacter autotrophicus (strain ATCC BAA-1158 / Py2) protein is Adenosylcobinamide-GDP ribazoletransferase.